Reading from the N-terminus, the 491-residue chain is UDP-N-acetylmuramoyl-L-alanyl-D-glutamate--2,6-diaminopimelate ligase (491 aa).

Ser-30 lines the UDP-N-acetyl-alpha-D-muramoyl-L-alanyl-D-glutamate pocket. 108 to 114 (GTNGKTT) serves as a coordination point for ATP. UDP-N-acetyl-alpha-D-muramoyl-L-alanyl-D-glutamate is bound by residues Asn-149, 150–151 (TT), Ser-177, Gln-183, and Arg-185. An N6-carboxylysine modification is found at Lys-217. Meso-2,6-diaminopimelate is bound by residues Arg-383, 407 to 410 (DNPR), Gly-458, and Glu-462. The short motif at 407 to 410 (DNPR) is the Meso-diaminopimelate recognition motif element.

The protein belongs to the MurCDEF family. MurE subfamily. Mg(2+) serves as cofactor. Post-translationally, carboxylation is probably crucial for Mg(2+) binding and, consequently, for the gamma-phosphate positioning of ATP.

The protein localises to the cytoplasm. It catalyses the reaction UDP-N-acetyl-alpha-D-muramoyl-L-alanyl-D-glutamate + meso-2,6-diaminopimelate + ATP = UDP-N-acetyl-alpha-D-muramoyl-L-alanyl-gamma-D-glutamyl-meso-2,6-diaminopimelate + ADP + phosphate + H(+). It functions in the pathway cell wall biogenesis; peptidoglycan biosynthesis. Its function is as follows. Catalyzes the addition of meso-diaminopimelic acid to the nucleotide precursor UDP-N-acetylmuramoyl-L-alanyl-D-glutamate (UMAG) in the biosynthesis of bacterial cell-wall peptidoglycan. The polypeptide is UDP-N-acetylmuramoyl-L-alanyl-D-glutamate--2,6-diaminopimelate ligase (Listeria monocytogenes serotype 4b (strain F2365)).